The following is a 155-amino-acid chain: Putative pre-16S rRNA nuclease (155 aa).

Belongs to the YqgF nuclease family.

It is found in the cytoplasm. In terms of biological role, could be a nuclease involved in processing of the 5'-end of pre-16S rRNA. This Xanthomonas euvesicatoria pv. vesicatoria (strain 85-10) (Xanthomonas campestris pv. vesicatoria) protein is Putative pre-16S rRNA nuclease.